The following is a 206-amino-acid chain: Large ribosomal subunit protein uL4 (206 aa).

The protein belongs to the universal ribosomal protein uL4 family. As to quaternary structure, part of the 50S ribosomal subunit.

In terms of biological role, one of the primary rRNA binding proteins, this protein initially binds near the 5'-end of the 23S rRNA. It is important during the early stages of 50S assembly. It makes multiple contacts with different domains of the 23S rRNA in the assembled 50S subunit and ribosome. Its function is as follows. Forms part of the polypeptide exit tunnel. This Xanthobacter autotrophicus (strain ATCC BAA-1158 / Py2) protein is Large ribosomal subunit protein uL4.